The chain runs to 351 residues: MQTYGNPNVTYAWYAGNSGTTNRSGKFIAAHAAHAGLMMFWAGAFTLFELARYDSSIPMGNQNLICLPHLAGLGIGGVSNGVITEPYGCTVIAVLHLIFSGVLGAGGLLHSMRYEGDLGNYPEGSRAKKFDFEWDDPDRLTFILGHHLIFLGLGNIQFVEWARIHGIYDSAQGITRTVNYNLDLGMIWNHQADFLTINSLEDVMGGHAFLAFFLIIGGAFHIATKQYGQYTEFKGKGLLSAESVLSYSLAGVAYCAFVAAFWCATNTTIYPTDLYGEVLSLKFEFAPYFVDTADLPADAHTARAWLSNVHFYLGFFFLQGHLWHALRGMGFDFKRVGKAFDNMESAKITAG.

A run of 6 helical transmembrane segments spans residues 27 to 47, 64 to 84, 89 to 109, 203 to 223, 244 to 264, and 306 to 326; these read FIAA…AFTL, LICL…GVIT, CTVI…GGLL, VMGG…FHIA, VLSY…FWCA, and LSNV…WHAL.

It belongs to the PsbB/PsbC family. IsiA/Pcb subfamily. In terms of assembly, the antenna complex consists of divinyl chlorophylls (a and b) and divinyl chlorophyll a/b binding proteins and binds more divinyl chlorophyll b than does the antenna complex from high-light-adapted Prochlorococcus. Requires divinyl chlorophyll a as cofactor. It depends on divinyl chlorophyll b as a cofactor.

The protein resides in the cellular thylakoid membrane. Functionally, the antenna complex functions as a light receptor, it captures and delivers excitation energy to photosystems II and I. The Prochlorales pcb genes are not related to higher plant LHCs. This chain is Divinyl chlorophyll a/b light-harvesting protein PcbC (pcbC), found in Prochlorococcus marinus (strain SARG / CCMP1375 / SS120).